Consider the following 129-residue polypeptide: Beta-galactoside-binding lectin (129 aa).

S1 is subject to N-acetylserine. Residues G4–K129 form the Galectin domain. W69–E75 is a binding site for a beta-D-galactoside.

In terms of biological role, this protein binds beta-galactoside. Its physiological function is not yet known. The protein is Beta-galactoside-binding lectin of Electrophorus electricus (Electric eel).